The sequence spans 156 residues: Endoribonuclease YbeY (156 aa).

Zn(2+)-binding residues include histidine 122, histidine 126, and histidine 132.

It belongs to the endoribonuclease YbeY family. Requires Zn(2+) as cofactor.

It is found in the cytoplasm. In terms of biological role, single strand-specific metallo-endoribonuclease involved in late-stage 70S ribosome quality control and in maturation of the 3' terminus of the 16S rRNA. In Moorella thermoacetica (strain ATCC 39073 / JCM 9320), this protein is Endoribonuclease YbeY.